We begin with the raw amino-acid sequence, 669 residues long: DNA mismatch repair protein MutL (669 aa).

The segment at 357–379 (EQRQNTENNQEKTFSSEESNSKS) is disordered. A compositionally biased stretch (polar residues) spans 361 to 379 (NTENNQEKTFSSEESNSKS).

This sequence belongs to the DNA mismatch repair MutL/HexB family.

This protein is involved in the repair of mismatches in DNA. It is required for dam-dependent methyl-directed DNA mismatch repair. May act as a 'molecular matchmaker', a protein that promotes the formation of a stable complex between two or more DNA-binding proteins in an ATP-dependent manner without itself being part of a final effector complex. In Staphylococcus aureus (strain Mu3 / ATCC 700698), this protein is DNA mismatch repair protein MutL.